A 107-amino-acid chain; its full sequence is Nucleoid-associated protein XF_1808 (107 aa).

This sequence belongs to the YbaB/EbfC family. In terms of assembly, homodimer.

The protein resides in the cytoplasm. Its subcellular location is the nucleoid. Its function is as follows. Binds to DNA and alters its conformation. May be involved in regulation of gene expression, nucleoid organization and DNA protection. This Xylella fastidiosa (strain 9a5c) protein is Nucleoid-associated protein XF_1808.